The following is a 485-amino-acid chain: Terminase, large subunit (485 aa).

ADP contacts are provided by residues 17–22 (KPHHVQ), 40–45 (QSGKSE), and R79. Residues 22-197 (QLAIHRSTAK…EFFLMGWRGG (176 aa)) are ATPase activity. 2 residues coordinate ATP: Q97 and Q99. Residues 125 to 131 (SEFRGKS) carry the Walker A motif motif. The short motif at 145–150 (FVILDE) is the Walker B motif element. E150 acts as the For ATPase activity in catalysis. A nuclease region spans residues 256–438 (SNSVFSGLDM…DIVMSLALAY (183 aa)). 3 residues coordinate Mg(2+): D294, D347, and D429.

It belongs to the Tequatrovirus large terminase family. As to quaternary structure, interacts with the terminase small subunit; the active complex is composed of a pentamer of terminase large subunits and a dodecamer of terminase small subunits. Interacts with the portal protein. It depends on Mg(2+) as a cofactor.

The terminase large subunit acts as an ATP driven molecular motor necessary for viral DNA translocation into empty capsids and as an endonuclease that cuts the viral genome to initiate and to end a packaging reaction The terminase lies at a unique vertex of the procapsid and is composed of two subunits, a small terminase subunit involved in viral DNA recognition (packaging sequence), and a large terminase subunit possessing endonucleolytic and ATPase activities. Both terminase subunits heterooligomerize and are docked on the portal protein to form the packaging machine. The terminase large subunit exhibits endonuclease activity and cleaves the viral genome concatemer. Once the capsid is packaged with the DNA, the terminase complex is substituted by the tail. This chain is Terminase, large subunit, found in Thermus thermophilus (Thermus thermophilus phage P23-45).